A 184-amino-acid polypeptide reads, in one-letter code: Succinate dehydrogenase cytochrome b560 subunit, mitochondrial (184 aa).

A helical membrane pass occupies residues 65-94 (LTWMLSGFHRISGCVMAGTLLVGGLGFAVL). Residues 95 to 114 (PLDFTTFVEYIRGWNLPCAV) are Mitochondrial intermembrane-facing. A helical membrane pass occupies residues 115-139 (TAVFKYIIAFPIIFHTLNGIRFLGF). His-129 serves as a coordination point for heme. Topologically, residues 140–147 (DLAKGVDN) are mitochondrial matrix. A helical membrane pass occupies residues 148-169 (IGQVYKSGWLVFGVSAVIALAI). Topologically, residues 170–172 (VIN) are mitochondrial intermembrane.

Belongs to the cytochrome b560 family. As to quaternary structure, component of complex II composed of four subunits: a flavoprotein (FP), iron-sulfur protein (IP), and a cytochrome b560 composed of two transmembrane proteins. The cofactor is heme.

It is found in the mitochondrion inner membrane. It participates in carbohydrate metabolism; tricarboxylic acid cycle. Functionally, membrane-anchoring subunit of succinate dehydrogenase (SDH) that is involved in complex II of the mitochondrial electron transport chain and is responsible for transferring electrons from succinate to ubiquinone (coenzyme Q). Mediates resistance to enteropathogenic E.coli infection. This is Succinate dehydrogenase cytochrome b560 subunit, mitochondrial (mev-1) from Caenorhabditis briggsae.